The following is a 447-amino-acid chain: Tubulin beta-2 chain (447 aa).

Q11, E69, S138, G142, T143, G144, N204, and N226 together coordinate GTP. E69 is a binding site for Mg(2+). The segment at 427-447 (DASISEGEEEYEEEQQLENEE) is disordered. Acidic residues predominate over residues 432-447 (EGEEEYEEEQQLENEE).

The protein belongs to the tubulin family. In terms of assembly, dimer of alpha and beta chains. A typical microtubule is a hollow water-filled tube with an outer diameter of 25 nm and an inner diameter of 15 nM. Alpha-beta heterodimers associate head-to-tail to form protofilaments running lengthwise along the microtubule wall with the beta-tubulin subunit facing the microtubule plus end conferring a structural polarity. Microtubules usually have 13 protofilaments but different protofilament numbers can be found in some organisms and specialized cells. The cofactor is Mg(2+).

The protein localises to the cytoplasm. The protein resides in the cytoskeleton. Its function is as follows. Tubulin is the major constituent of microtubules, a cylinder consisting of laterally associated linear protofilaments composed of alpha- and beta-tubulin heterodimers. Microtubules grow by the addition of GTP-tubulin dimers to the microtubule end, where a stabilizing cap forms. Below the cap, tubulin dimers are in GDP-bound state, owing to GTPase activity of alpha-tubulin. This is Tubulin beta-2 chain (TUB2) from Erysiphe pisi (Pea powdery mildew).